The chain runs to 100 residues: DNA-directed RNA polymerase subunit Rpo11 (100 aa).

Belongs to the archaeal Rpo11/eukaryotic RPB11/RPC19 RNA polymerase subunit family. In terms of assembly, part of the RNA polymerase complex.

The protein resides in the cytoplasm. It catalyses the reaction RNA(n) + a ribonucleoside 5'-triphosphate = RNA(n+1) + diphosphate. Its function is as follows. DNA-dependent RNA polymerase (RNAP) catalyzes the transcription of DNA into RNA using the four ribonucleoside triphosphates as substrates. The polypeptide is DNA-directed RNA polymerase subunit Rpo11 (Picrophilus torridus (strain ATCC 700027 / DSM 9790 / JCM 10055 / NBRC 100828 / KAW 2/3)).